A 52-amino-acid polypeptide reads, in one-letter code: Small ribosomal subunit protein uS14 (52 aa).

The Zn(2+) site is built by C17, C20, C35, and C38.

It belongs to the universal ribosomal protein uS14 family. Zinc-binding uS14 subfamily. Part of the 30S ribosomal subunit. It depends on Zn(2+) as a cofactor.

Functionally, binds 16S rRNA, required for the assembly of 30S particles. In Halobacterium salinarum (strain ATCC 700922 / JCM 11081 / NRC-1) (Halobacterium halobium), this protein is Small ribosomal subunit protein uS14.